A 280-amino-acid chain; its full sequence is Putative protein-tyrosine sulfotransferase (280 aa).

Residue R16–T20 coordinates 3'-phosphoadenylyl sulfate. A disulfide bond links C34 and C89. E37 (proton donor/acceptor) is an active-site residue. An N-linked (GlcNAc...) asparagine glycan is attached at N57. Positions 116, 124, and 128 each coordinate 3'-phosphoadenylyl sulfate. An N-linked (GlcNAc...) asparagine glycan is attached at N136. The cysteines at positions 158 and 165 are disulfide-linked. Residues Y170 and S215 to N224 each bind 3'-phosphoadenylyl sulfate.

The protein belongs to the protein sulfotransferase family.

It carries out the reaction L-tyrosyl-[protein] + 3'-phosphoadenylyl sulfate = O-sulfo-L-tyrosine-[protein] + adenosine 3',5'-bisphosphate + H(+). Functionally, catalyzes the O-sulfation of tyrosine residues within acidic motifs of polypeptides, using 3'-phosphoadenylyl sulfate (PAPS) as cosubstrate. The chain is Putative protein-tyrosine sulfotransferase from Caenorhabditis briggsae.